Reading from the N-terminus, the 858-residue chain is Lysine-specific demethylase JMJ706 (858 aa).

The region spanning 103–144 is the JmjN domain; the sequence is CPVYYPTKEEFEDPIGYIQKIAPVASKYGICKIVSPVSASVP. Residues 250 to 420 form the JmjC domain; the sequence is KSNWNLKNFS…LGSVASRRYA (171 aa). Residues His293, Glu295, and His388 each contribute to the Fe cation site. The segment covering 737-746 has biased composition (basic and acidic residues); it reads QHNKRPEDYG. Disordered regions lie at residues 737 to 791 and 829 to 858; these read QHNK…SAKQ and SSST…WPAI. Positions 829 to 844 are enriched in polar residues; the sequence is SSSTNRVVEQGSSGQR.

The cofactor is Fe(2+).

It is found in the nucleus. The catalysed reaction is N(6),N(6),N(6)-trimethyl-L-lysyl(9)-[histone H3] + 2 2-oxoglutarate + 2 O2 = N(6)-methyl-L-lysyl(9)-[histone H3] + 2 formaldehyde + 2 succinate + 2 CO2. In terms of biological role, histone demethylase that demethylates 'Lys-9' (H3K9me) of histone H3 with a specific activity for H3K9me3 and H3K9me2. No activity on H3K4me3, H3K9me1, H3K27me2 and H3K36me3/2. Involved in the control of floral organ development by demethylating H3K9me3 and H3K9me2 in the promoter regions of DH1 and MADS47. The 'Lys-9' demethylation of these two genes is required for induction of their expression. In Oryza sativa subsp. japonica (Rice), this protein is Lysine-specific demethylase JMJ706 (JMJ706).